The chain runs to 344 residues: Follistatin (344 aa).

Residues 1–29 (MVCARHQPGGLCLLLLLLCQFMEDRSAQA) form the signal peptide. One can recognise a TB domain in the interval 30 to 103 (GNCWLRQAKN…TCENVDCGPG (74 aa)). 18 cysteine pairs are disulfide-bonded: C32/C55, C42/C88, C56/C91, C95/C106, C100/C116, C118/C150, C122/C143, C132/C164, C168/C179, C173/C189, C192/C225, C196/C218, C207/C239, C245/C256, C250/C267, C270/C302, C274/C295, and C284/C316. Residues 94–117 (TCENVDCGPGKKCRMNKKNKPRCV) enclose the Follistatin-like 1 domain. The 55-residue stretch at 112 to 166 (NKPRCVCAPDCSNITWKGPVCGLDGKTYRNECALLKARCKEQPELEVQYQGKCKK) folds into the Kazal-like 1 domain. The N-linked (GlcNAc...) asparagine glycan is linked to N124. Residues 167–190 (TCRDVFCPGSSTCVVDQTNNAYCV) enclose the Follistatin-like 2 domain. The Kazal-like 2 domain maps to 186-241 (NAYCVTCNRICPEPSSSEQYLCGNDGVTYSSACHLRKATCLLGRSIGLAYEGKCIK). Residues 244 to 268 (SCEDIQCGGGKKCLWDSKVGRGRCS) enclose the Follistatin-like 3 domain. Positions 264–318 (RGRCSLCDELCPDSKSDEPVCASDNATYASECAMKEAACSSGVLLEVKHSGSCNS) constitute a Kazal-like 3 domain. N288 is a glycosylation site (N-linked (GlcNAc...) asparagine). The disordered stretch occupies residues 315–344 (SCNSISEETEEEEEEEDQDYSFPISSILEW). The segment covering 321–333 (EETEEEEEEEDQD) has biased composition (acidic residues).

Interacts with GDF11. Interacts with activin A/INHBA. Interacts with myostatin/MSTN.

The protein resides in the secreted. The protein localises to the nucleus. It is found in the nucleolus. In terms of biological role, multifunctional regulatory protein whose primary function is to antagonize members of the transforming growth factor beta (TGF-beta) superfamily including activin, myostatin, GDF11 or bone morphogenetic proteins (BMPs). Mechanistically, binds to these ligands in the extracellular space, blocking their type II receptor-binding site to inhibit downstream signaling. Plays an essential role in muscle fiber formation and growth both by preventing the repressive effects of myostatin and through SMAD3/AKT/mTOR signaling independently of myostatin. Also promotes neural differentiation by antagonizing the action BMP4. Acts as a specific inhibitor of the biosynthesis and secretion of pituitary follicle stimulating hormone (FSH) by sequestering activin A/INHBA. On the other hand, translocates into the nucleus where it down-regulates rRNA synthesis and ribosome biogenesis to maintain cellular energy homeostasis by binding to rDNA. This chain is Follistatin, found in Mus musculus (Mouse).